Reading from the N-terminus, the 320-residue chain is MARNKIALIGSGMIGGTLAHLAGLKELGDIVLFDIADGVPQGKGLDIAQSSPVEGFNAKLTGSSDYAAIEGADVCIVTAGVPRKPGMSRDDLLGINLKVMEQVGAGIKKYAPNAFVICITNPLDAMVWALQKFSGLPANKVVGMAGVLDSSRFRLFLAEEFNVSVQDVTAFVLGGHGDTMVPLARYSTVGGIPLTDLVKMGWVTAERLEEIIQRTRDGGAEIVGLLKTGSAFYAPAASAIEMAESYLKDKKRVLPCAAHLTGQYGVKDMYVGVPTVIGAGGVERVIEIELNKDEEAAFQKSVGAVAGLCEACINIAPALK.

NAD(+)-binding positions include glycine 10–glycine 15 and aspartate 34. Residues arginine 83 and arginine 89 each contribute to the substrate site. NAD(+) contacts are provided by residues asparagine 96 and isoleucine 119 to asparagine 121. Residues asparagine 121 and arginine 152 each coordinate substrate. Histidine 176 serves as the catalytic Proton acceptor.

It belongs to the LDH/MDH superfamily. MDH type 3 family.

The enzyme catalyses (S)-malate + NAD(+) = oxaloacetate + NADH + H(+). Its function is as follows. Catalyzes the reversible oxidation of malate to oxaloacetate. The chain is Malate dehydrogenase from Allorhizobium ampelinum (strain ATCC BAA-846 / DSM 112012 / S4) (Agrobacterium vitis (strain S4)).